A 33-amino-acid chain; its full sequence is Dolabellanin-B2 (33 aa).

Post-translationally, contains two disulfide bonds. Up to two of the methionines may be oxidized to methionine sulfoxides.

The protein localises to the secreted. Functionally, has antibacterial activity against Gram-negative bacteria E.coli JM109 and DH5-alpha, H.influenza IID 983, and V.vulnificus RIMD 2219009. Has antibacterial activity against Gram-positive bacteria S.aureus IID 1677, B.subtilis RIMD 0225014 and L.monocytogenes VIU206. Possesses antifungal activity against S.cerevisiae A581A, S.pombe IFO 1628, C.albicans ATCC 36232 and TIMM-1623, and C.tropicalis TIMM-0313. The protein is Dolabellanin-B2 of Dolabella auricularia (Shoulderblade sea cat).